The following is a 187-amino-acid chain: Peptidyl-tRNA hydrolase (187 aa).

Tyr15 is a tRNA binding site. His20 acts as the Proton acceptor in catalysis. 3 residues coordinate tRNA: Phe65, Asn67, and Asn113.

Belongs to the PTH family. In terms of assembly, monomer.

It localises to the cytoplasm. It carries out the reaction an N-acyl-L-alpha-aminoacyl-tRNA + H2O = an N-acyl-L-amino acid + a tRNA + H(+). Hydrolyzes ribosome-free peptidyl-tRNAs (with 1 or more amino acids incorporated), which drop off the ribosome during protein synthesis, or as a result of ribosome stalling. Its function is as follows. Catalyzes the release of premature peptidyl moieties from peptidyl-tRNA molecules trapped in stalled 50S ribosomal subunits, and thus maintains levels of free tRNAs and 50S ribosomes. The chain is Peptidyl-tRNA hydrolase from Elusimicrobium minutum (strain Pei191).